The chain runs to 495 residues: Maturase K (495 aa).

It belongs to the intron maturase 2 family. MatK subfamily.

The protein resides in the plastid. The protein localises to the chloroplast. Functionally, usually encoded in the trnK tRNA gene intron. Probably assists in splicing its own and other chloroplast group II introns. In Torreya californica (California nutmeg), this protein is Maturase K.